A 328-amino-acid chain; its full sequence is Phosphate acyltransferase (328 aa).

Belongs to the PlsX family. In terms of assembly, homodimer. Probably interacts with PlsY.

It is found in the cytoplasm. It carries out the reaction a fatty acyl-[ACP] + phosphate = an acyl phosphate + holo-[ACP]. It participates in lipid metabolism; phospholipid metabolism. In terms of biological role, catalyzes the reversible formation of acyl-phosphate (acyl-PO(4)) from acyl-[acyl-carrier-protein] (acyl-ACP). This enzyme utilizes acyl-ACP as fatty acyl donor, but not acyl-CoA. In Campylobacter jejuni subsp. doylei (strain ATCC BAA-1458 / RM4099 / 269.97), this protein is Phosphate acyltransferase.